The primary structure comprises 548 residues: Chaperonin GroEL (548 aa).

ATP-binding positions include 30 to 33 (TLGP), lysine 51, 87 to 91 (DGTTT), glycine 415, 478 to 480 (NAA), and aspartate 494.

It belongs to the chaperonin (HSP60) family. Forms a cylinder of 14 subunits composed of two heptameric rings stacked back-to-back. Interacts with the co-chaperonin GroES.

It localises to the cytoplasm. It carries out the reaction ATP + H2O + a folded polypeptide = ADP + phosphate + an unfolded polypeptide.. In terms of biological role, together with its co-chaperonin GroES, plays an essential role in assisting protein folding. The GroEL-GroES system forms a nano-cage that allows encapsulation of the non-native substrate proteins and provides a physical environment optimized to promote and accelerate protein folding. In Trichlorobacter lovleyi (strain ATCC BAA-1151 / DSM 17278 / SZ) (Geobacter lovleyi), this protein is Chaperonin GroEL.